Consider the following 430-residue polypeptide: Protein AST2 (430 aa).

Functionally, lipid raft-associated protein involved in the targeting of PMA1 from Golgi to the plasma membrane. May induce clustering of PMA1, which facilitates partition of PMA1 into lipid rafts after leaving the ER its and transport to the cell surface. The sequence is that of Protein AST2 from Saccharomyces cerevisiae (strain ATCC 204508 / S288c) (Baker's yeast).